A 103-amino-acid chain; its full sequence is Phosphoribosyl-ATP pyrophosphatase (103 aa).

The disordered stretch occupies residues 79-103 (SVQAELERREGKLSTTRDRKEIDEL). The segment covering 83 to 103 (ELERREGKLSTTRDRKEIDEL) has biased composition (basic and acidic residues).

It belongs to the PRA-PH family.

The protein localises to the cytoplasm. The enzyme catalyses 1-(5-phospho-beta-D-ribosyl)-ATP + H2O = 1-(5-phospho-beta-D-ribosyl)-5'-AMP + diphosphate + H(+). Its pathway is amino-acid biosynthesis; L-histidine biosynthesis; L-histidine from 5-phospho-alpha-D-ribose 1-diphosphate: step 2/9. In Listeria welshimeri serovar 6b (strain ATCC 35897 / DSM 20650 / CCUG 15529 / CIP 8149 / NCTC 11857 / SLCC 5334 / V8), this protein is Phosphoribosyl-ATP pyrophosphatase.